The primary structure comprises 98 residues: Small ribosomal subunit protein bS20 (98 aa).

The segment covering 1–15 (MAPKKTTKKGGPKKR) has biased composition (basic residues). The disordered stretch occupies residues 1–21 (MAPKKTTKKGGPKKRPSAEKR).

Belongs to the bacterial ribosomal protein bS20 family.

Functionally, binds directly to 16S ribosomal RNA. In Chlamydia abortus (strain DSM 27085 / S26/3) (Chlamydophila abortus), this protein is Small ribosomal subunit protein bS20.